A 213-amino-acid polypeptide reads, in one-letter code: C-type lectin domain family 4 member C (213 aa).

The Cytoplasmic portion of the chain corresponds to 1-21 (MVPEEEPQDREKGLWWFQLKV). The chain crosses the membrane as a helical; Signal-anchor for type II membrane protein span at residues 22–44 (WSMAVVSILLLSVCFTVSSVVPH). The Extracellular segment spans residues 45–213 (NFMYSKTVKR…SICKMKKIYI (169 aa)). Intrachain disulfides connect Cys70-Cys82 and Cys83-Cys94. A C-type lectin domain is found at 90–207 (FQSSCYFIST…CHVPQKSICK (118 aa)). N-linked (GlcNAc...) asparagine glycans are attached at residues Asn110 and Asn137. Disulfide bonds link Cys111–Cys206 and Cys180–Cys198. Ser139 serves as a coordination point for a carbohydrate. A glycan (N-linked (GlcNAc...) asparagine) is linked at Asn164. Ca(2+)-binding residues include Glu172, Asn174, and Glu178. A carbohydrate contacts are provided by residues Glu178, 184–186 (NFR), Asn194, 194–195 (ND), and Gln202. Ca(2+)-binding residues include Asn194 and Asp195.

In terms of assembly, homodimer. As to expression, expressed in plasmacytoid dendritic cells (PDCs). Constitutively expressed in immature monocyte-derived dendritic cells (iMDDC) and is significantly down-regulated upon maturation with LPS but not with TNF-alpha.

The protein resides in the cell membrane. Its function is as follows. Lectin-type cell surface receptor which may play a role in antigen capturing by dendritic cells. Specifically recognizes non-sialylated galactose-terminated biantennary glycans containing the trisaccharide epitope Gal(beta1-3/4)GlcNAc(beta1-2)Man. Binds to serum IgG. Efficiently targets ligand into antigen-processing and peptide-loading compartments for presentation to T-cells. May mediate potent inhibition of induction of IFN-alpha/beta expression in plasmacytoid dendritic cells. May act as a signaling receptor that activates protein-tyrosine kinases and mobilizes intracellular calcium. The chain is C-type lectin domain family 4 member C (CLEC4C) from Homo sapiens (Human).